The following is a 41-amino-acid chain: uncharacterized protein (41 aa).

This is an uncharacterized protein from Bacillus subtilis (strain 168).